Consider the following 195-residue polypeptide: Holliday junction branch migration complex subunit RuvA (195 aa).

The interval 1-64 is domain I; that stretch reads MIASIRGVIQ…EDALTLYGFS (64 aa). The domain II stretch occupies residues 65–139; the sequence is DNAQRSLFEQ…GKIDFRQLAA (75 aa). Residues 139–143 form a flexible linker region; it reads ASGST. The segment at 144–195 is domain III; it reads SVSALDRELSEILVSLGYSAAEAAAAIASLPSDAPPTLEERLRLALRYFGSA.

It belongs to the RuvA family. As to quaternary structure, homotetramer. Forms an RuvA(8)-RuvB(12)-Holliday junction (HJ) complex. HJ DNA is sandwiched between 2 RuvA tetramers; dsDNA enters through RuvA and exits via RuvB. An RuvB hexamer assembles on each DNA strand where it exits the tetramer. Each RuvB hexamer is contacted by two RuvA subunits (via domain III) on 2 adjacent RuvB subunits; this complex drives branch migration. In the full resolvosome a probable DNA-RuvA(4)-RuvB(12)-RuvC(2) complex forms which resolves the HJ.

It is found in the cytoplasm. Its function is as follows. The RuvA-RuvB-RuvC complex processes Holliday junction (HJ) DNA during genetic recombination and DNA repair, while the RuvA-RuvB complex plays an important role in the rescue of blocked DNA replication forks via replication fork reversal (RFR). RuvA specifically binds to HJ cruciform DNA, conferring on it an open structure. The RuvB hexamer acts as an ATP-dependent pump, pulling dsDNA into and through the RuvAB complex. HJ branch migration allows RuvC to scan DNA until it finds its consensus sequence, where it cleaves and resolves the cruciform DNA. The sequence is that of Holliday junction branch migration complex subunit RuvA from Chloroflexus aggregans (strain MD-66 / DSM 9485).